We begin with the raw amino-acid sequence, 205 residues long: Thiamine-phosphate synthase (205 aa).

4-amino-2-methyl-5-(diphosphooxymethyl)pyrimidine contacts are provided by residues 36–40 (QYRRK) and aspartate 68. The Mg(2+) site is built by aspartate 69 and aspartate 88. Residue serine 106 coordinates 4-amino-2-methyl-5-(diphosphooxymethyl)pyrimidine. 2-[(2R,5Z)-2-carboxy-4-methylthiazol-5(2H)-ylidene]ethyl phosphate is bound at residue 132–134 (SPT). Lysine 135 is a 4-amino-2-methyl-5-(diphosphooxymethyl)pyrimidine binding site. Residues glycine 162 and 182 to 183 (IS) contribute to the 2-[(2R,5Z)-2-carboxy-4-methylthiazol-5(2H)-ylidene]ethyl phosphate site.

This sequence belongs to the thiamine-phosphate synthase family. Mg(2+) serves as cofactor.

It carries out the reaction 2-[(2R,5Z)-2-carboxy-4-methylthiazol-5(2H)-ylidene]ethyl phosphate + 4-amino-2-methyl-5-(diphosphooxymethyl)pyrimidine + 2 H(+) = thiamine phosphate + CO2 + diphosphate. The enzyme catalyses 2-(2-carboxy-4-methylthiazol-5-yl)ethyl phosphate + 4-amino-2-methyl-5-(diphosphooxymethyl)pyrimidine + 2 H(+) = thiamine phosphate + CO2 + diphosphate. The catalysed reaction is 4-methyl-5-(2-phosphooxyethyl)-thiazole + 4-amino-2-methyl-5-(diphosphooxymethyl)pyrimidine + H(+) = thiamine phosphate + diphosphate. The protein operates within cofactor biosynthesis; thiamine diphosphate biosynthesis; thiamine phosphate from 4-amino-2-methyl-5-diphosphomethylpyrimidine and 4-methyl-5-(2-phosphoethyl)-thiazole: step 1/1. Its function is as follows. Condenses 4-methyl-5-(beta-hydroxyethyl)thiazole monophosphate (THZ-P) and 2-methyl-4-amino-5-hydroxymethyl pyrimidine pyrophosphate (HMP-PP) to form thiamine monophosphate (TMP). The sequence is that of Thiamine-phosphate synthase from Caldivirga maquilingensis (strain ATCC 700844 / DSM 13496 / JCM 10307 / IC-167).